The primary structure comprises 179 residues: Putative ankyrin repeat protein RF_0922 (179 aa).

ANK repeat units follow at residues Lys5 to Ile34, Asn40 to Val72, Asn75 to Ile104, Asn110 to Ile139, and Asn145 to Ile174.

This is Putative ankyrin repeat protein RF_0922 from Rickettsia felis (strain ATCC VR-1525 / URRWXCal2) (Rickettsia azadi).